A 147-amino-acid chain; its full sequence is uncharacterized protein (147 aa).

A run of 4 helical transmembrane segments spans residues 13 to 33 (LSLV…IIGL), 45 to 65 (LFVG…AYFL), 80 to 100 (YLFT…LILI), and 116 to 136 (WGFF…IIPY).

The protein resides in the cell membrane. This is an uncharacterized protein from Methanocaldococcus jannaschii (strain ATCC 43067 / DSM 2661 / JAL-1 / JCM 10045 / NBRC 100440) (Methanococcus jannaschii).